A 232-amino-acid polypeptide reads, in one-letter code: Cysteine proteinase inhibitor 7 (232 aa).

The first 29 residues, 1 to 29 (MDMRRASMCMMLICVSLVLLSGFGQFVIC), serve as a signal peptide directing secretion. 2 Cystatin domains span residues 46–135 (GGFS…KNII) and 152–214 (FDWR…ERGN). The Secondary area of contact motif lies at 91–95 (QVVAG). At Ser181 the chain carries Phosphoserine.

Belongs to the cystatin family. Phytocystatin subfamily.

The protein resides in the secreted. In terms of biological role, specific inhibitor of cysteine proteinases. Probably involved in the regulation of endogenous processes and in defense against pests and pathogens. The polypeptide is Cysteine proteinase inhibitor 7 (CYS7) (Arabidopsis thaliana (Mouse-ear cress)).